A 466-amino-acid chain; its full sequence is Adenosylhomocysteinase (466 aa).

Substrate contacts are provided by Thr57, Asp132, and Glu192. An NAD(+)-binding site is contributed by 193–195 (TTT). Substrate-binding residues include Lys222 and Asp226. NAD(+) contacts are provided by residues Asn227, 256–261 (GYGDVG), Glu279, Asn314, 335–337 (IGH), and Asn380.

Belongs to the adenosylhomocysteinase family. It depends on NAD(+) as a cofactor.

It is found in the cytoplasm. The enzyme catalyses S-adenosyl-L-homocysteine + H2O = L-homocysteine + adenosine. Its pathway is amino-acid biosynthesis; L-homocysteine biosynthesis; L-homocysteine from S-adenosyl-L-homocysteine: step 1/1. Its function is as follows. May play a key role in the regulation of the intracellular concentration of adenosylhomocysteine. The protein is Adenosylhomocysteinase of Brucella anthropi (strain ATCC 49188 / DSM 6882 / CCUG 24695 / JCM 21032 / LMG 3331 / NBRC 15819 / NCTC 12168 / Alc 37) (Ochrobactrum anthropi).